The primary structure comprises 616 residues: Hemagglutinin-neuraminidase (616 aa).

Topologically, residues 1-26 (MDRAVSQVALENDEREAKNTWRLVFR) are intravirion. The chain crosses the membrane as a helical span at residues 27–47 (IAILLLTVVTLAISAAALAYS). At 48 to 616 (MEASTPSDLI…ELESYAASWP (569 aa)) the chain is on the virion surface side. The N-linked (GlcNAc...) asparagine; by host glycan is linked to Asn119. Positions 124–152 (GAPIHDPDYIGGIGKELIVDDASDVTSFY) are important for interaction with fusion/F protein. 3 disulfide bridges follow: Cys172-Cys196, Cys186-Cys247, and Cys238-Cys251. The interval 234–239 (NRKSCS) is involved in neuraminidase activity. 2 N-linked (GlcNAc...) asparagine; by host glycosylation sites follow: Asn341 and Asn433. 2 disulfide bridges follow: Cys344–Cys461 and Cys455–Cys465. N-linked (GlcNAc...) asparagine; by host glycans are attached at residues Asn481, Asn538, and Asn600. Residues Cys531 and Cys542 are joined by a disulfide bond.

Belongs to the paramyxoviruses hemagglutinin-neuraminidase family. As to quaternary structure, homotetramer; composed of disulfide-linked homodimers. Interacts with F protein trimer. Interacts with host CG-1B; this interaction inhibits viral adsorption and replication rather than internalization.

It is found in the virion membrane. The protein localises to the host cell membrane. The catalysed reaction is Hydrolysis of alpha-(2-&gt;3)-, alpha-(2-&gt;6)-, alpha-(2-&gt;8)- glycosidic linkages of terminal sialic acid residues in oligosaccharides, glycoproteins, glycolipids, colominic acid and synthetic substrates.. Its function is as follows. Mediates the viral entry into the host cell together with fusion/F protein. Attaches the virus to sialic acid-containing cell receptors and thereby initiates infection. Binding of HN protein to the receptor induces a conformational change that allows the F protein to trigger virion/cell membranes fusion. Functionally, neuraminidase activity ensures the efficient spread of the virus by dissociating the mature virions from the neuraminic acid containing glycoproteins. In Newcastle disease virus (strain Chicken/Northern Ireland/Ulster/67) (NDV), this protein is Hemagglutinin-neuraminidase (HN).